The following is a 181-amino-acid chain: HGPRTase-like protein 2 (181 aa).

Belongs to the purine/pyrimidine phosphoribosyltransferase family. Archaeal HPRT subfamily.

Functionally, may catalyze a purine salvage reaction, the substrate is unknown. This chain is HGPRTase-like protein 2, found in Natrialba magadii (strain ATCC 43099 / DSM 3394 / CCM 3739 / CIP 104546 / IAM 13178 / JCM 8861 / NBRC 102185 / NCIMB 2190 / MS3) (Natronobacterium magadii).